The sequence spans 213 residues: Large ribosomal subunit protein mL67 (213 aa).

Belongs to the mitochondrion-specific ribosomal protein mL67 family.

The protein resides in the nucleus. It localises to the mitochondrion. Functionally, transcription factor involved in regulation of RNA polymerase II-dependent transcription. Also involved in regulation of mitochondrial DNA recombination, maintenance and repair, and generation of homoplasmic cells. This is Large ribosomal subunit protein mL67 (MHR1) from Eremothecium gossypii (strain ATCC 10895 / CBS 109.51 / FGSC 9923 / NRRL Y-1056) (Yeast).